Reading from the N-terminus, the 242-residue chain is Lectin-like protein At1g53060 (242 aa).

The tract at residues 3-237 (FHGDAEYASE…RHEILDWSFE (235 aa)) is legume-lectin like. Ser207 carries the post-translational modification Phosphoserine.

The protein belongs to the leguminous lectin family.

In Arabidopsis thaliana (Mouse-ear cress), this protein is Lectin-like protein At1g53060.